The chain runs to 248 residues: 3-deoxy-manno-octulosonate cytidylyltransferase (248 aa).

The protein belongs to the KdsB family.

It is found in the cytoplasm. The catalysed reaction is 3-deoxy-alpha-D-manno-oct-2-ulosonate + CTP = CMP-3-deoxy-beta-D-manno-octulosonate + diphosphate. It participates in nucleotide-sugar biosynthesis; CMP-3-deoxy-D-manno-octulosonate biosynthesis; CMP-3-deoxy-D-manno-octulosonate from 3-deoxy-D-manno-octulosonate and CTP: step 1/1. Its pathway is bacterial outer membrane biogenesis; lipopolysaccharide biosynthesis. Functionally, activates KDO (a required 8-carbon sugar) for incorporation into bacterial lipopolysaccharide in Gram-negative bacteria. The protein is 3-deoxy-manno-octulosonate cytidylyltransferase of Chlorobium chlorochromatii (strain CaD3).